The following is a 274-amino-acid chain: 2,3,4,5-tetrahydropyridine-2,6-dicarboxylate N-succinyltransferase (274 aa).

The substrate site is built by arginine 107 and aspartate 144.

It belongs to the transferase hexapeptide repeat family. As to quaternary structure, homotrimer.

Its subcellular location is the cytoplasm. The enzyme catalyses (S)-2,3,4,5-tetrahydrodipicolinate + succinyl-CoA + H2O = (S)-2-succinylamino-6-oxoheptanedioate + CoA. It functions in the pathway amino-acid biosynthesis; L-lysine biosynthesis via DAP pathway; LL-2,6-diaminopimelate from (S)-tetrahydrodipicolinate (succinylase route): step 1/3. The sequence is that of 2,3,4,5-tetrahydropyridine-2,6-dicarboxylate N-succinyltransferase from Cereibacter sphaeroides (strain ATCC 17029 / ATH 2.4.9) (Rhodobacter sphaeroides).